A 103-amino-acid chain; its full sequence is Protein FMC1 homolog (103 aa).

This sequence belongs to the FMC1 family.

The polypeptide is Protein FMC1 homolog (Nematostella vectensis (Starlet sea anemone)).